The sequence spans 351 residues: Prostaglandin reductase 2 (351 aa).

99–100 (FY) is a substrate binding site. NADP(+) contacts are provided by residues 165–168 (GACG), Lys-192, Tyr-208, Asn-231, 253–259 (CGQISQY), 287–289 (FTV), and Asn-337. 288-290 (TVL) serves as a coordination point for substrate.

It belongs to the NADP-dependent oxidoreductase L4BD family. Monomer. In terms of tissue distribution, widely expressed with highest levels in adipose tissues.

It localises to the cytoplasm. It catalyses the reaction 13,14-dihydro-15-oxo-prostaglandin E2 + NAD(+) = 15-oxoprostaglandin E2 + NADH + H(+). The catalysed reaction is 13,14-dihydro-15-oxo-prostaglandin E2 + NADP(+) = 15-oxoprostaglandin E2 + NADPH + H(+). The enzyme catalyses 13,14-dihydro-15-oxo-PGF2alpha + NADP(+) = 15-oxoprostaglandin F2alpha + NADPH + H(+). It carries out the reaction 13,14-dihydro-15-oxo-prostaglandin E1 + NADP(+) = 15-oxoprostaglandin E1 + NADPH + H(+). It catalyses the reaction 13,14-dihydro-15-oxo-prostaglandin F1alpha + NADP(+) = 15-oxoprostaglandin F1alpha + NADPH + H(+). Functions as 15-oxo-prostaglandin 13-reductase and acts on 15-keto-PGE1, 15-keto-PGE2, 15-keto-PGE1-alpha and 15-keto-PGE2-alpha with highest activity towards 15-keto-PGE2. Overexpression represses transcriptional activity of PPARG and inhibits adipocyte differentiation. This chain is Prostaglandin reductase 2, found in Mus musculus (Mouse).